The chain runs to 671 residues: Receptor-interacting serine/threonine-protein kinase 1 (671 aa).

Serine 6 is subject to Phosphoserine; by IKKA and IKKB. Residues 17 to 289 enclose the Protein kinase domain; that stretch reads FLESAELDSG…GIEEKFRPFY (273 aa). Serine 20 bears the Phosphoserine; by autocatalysis mark. Residues 23–31 and lysine 45 each bind ATP; that span reads LDSGGFGKV. Phosphoserine; by IKKA and IKKB is present on serine 25. Aspartate 138 serves as the catalytic Proton acceptor. Serine 161 carries the phosphoserine; by RIPK3 and autocatalysis modification. Serine 166 carries the phosphoserine; by autocatalysis modification. Positions 290-582 are interaction with SQSTM1; the sequence is LSQLEESVEE…QAIFDNTTSL (293 aa). Serine 303 carries the post-translational modification Phosphoserine. A phosphoserine; by MAP3K7 mark is found at serine 320, serine 331, and serine 333. The span at 331–348 shows a compositional bias: polar residues; that stretch reads SRSNSATEQPGSLHSSQG. Positions 331–354 are disordered; sequence SRSNSATEQPGSLHSSQGLGMGPV. Lysine 377 is covalently cross-linked (Glycyl lysine isopeptide (Lys-Gly) (interchain with G-Cter in ubiquitin)). The residue at position 384 (tyrosine 384) is a Phosphotyrosine. The disordered stretch occupies residues 389–455; that stretch reads SRMDRQTKQQ…GNAVHQPSGL (67 aa). Residues 428–444 are compositionally biased toward polar residues; the sequence is NFQNTEGKGTAYSSAAS. The RIP homotypic interaction motif (RHIM) signature appears at 531-547; sequence YTIYNSTGIQIGAYNYM. The Death domain maps to 583-669; that stretch reads TDKHLDPIRE…DLLSSLIYVS (87 aa). (Microbial infection) N-beta-linked (GlcNAc) arginine glycosylation is present at arginine 603.

The protein belongs to the protein kinase superfamily. TKL Ser/Thr protein kinase family. Homodimer. Interacts (via RIP homotypic interaction motif) with RIPK3 (via RIP homotypic interaction motif); this interaction induces RIPK1 phosphorylation and formation of a RIPK1-RIPK3 necroptosis-inducing complex. Upon TNF-induced necrosis, the RIPK1-RIPK3 dimer further interacts with PGAM5 and MLKL; the formation of this complex leads to PGAM5 phosphorylation and increase in PGAM5 phosphatase activity. Interacts (via the death domain) with TNFRSF6 (via the death domain) and TRADD (via the death domain). Is recruited by TRADD to TNFRSF1A in a TNF-dependent process. Binds RNF216, EGFR, IKBKG, TRAF1, TRAF2 and TRAF3. Interacts with BNLF1. Interacts with SQSTM1 upon TNF-alpha stimulation. May interact with MAVS/IPS1. Interacts with ZFAND5. Interacts with RBCK1. Interacts with ZBP1. Interacts with BIRC2/c-IAP1, BIRC3/c-IAP2 and XIAP/BIRC4. Interacts (via kinase domain) with DAB2IP (via Ras-GAP domain); the interaction occurs in a TNF-alpha-dependent manner. Interacts with ARHGEF2. Interacts (via protein kinase domain) with RFFL; involved in RIPK1 ubiquitination. Interacts with RNF34; involved in RIPK1 ubiquitination. Interacts with TICAM1 and this interaction is enhanced in the presence of WDFY1. Interacts with PELI1. Interacts (via death domain) with CRADD (via death domain); the interaction is direct. Component of complex IIa composed of at least RIPK1, FADD and CASP8. Component of the AIM2 PANoptosome complex, a multiprotein complex that drives inflammatory cell death (PANoptosis). Interacts with MAP3K7, CFLAR, CASP8, FADD and NEMO. Interacts with TAX1BP1; this interaction negatively regulates RIPK1 ubiquitination. Interacts with GRB2. Interacts with DDX24; this interaction disrupts RLR signaling activation of IFN-dependent transcription factor IRF7. In terms of assembly, (Microbial infection) Interacts with mumps virus protein SH; this interaction inhibits downstream NF-kappa-B pathway activation. As to quaternary structure, (Microbial infection) Interacts with Murid herpesvirus 1 protein RIR1. (Microbial infection) Interacts (via RIP homotypic interaction motif) with herpes simplex virus 1/HHV-1 protein RIR1/ICP6 (via RIP homotypic interaction motif); this interaction prevents necroptosis activation. In terms of assembly, (Microbial infection) Interacts (via RIP homotypic interaction motif) with herpes simplex virus 2/HHV-2 protein RIR1/ICP10 (via RIP homotypic interaction motif); this interaction prevents necroptosis activation. Post-translationally, (Microbial infection) Proteolytically cleaved by S.flexneri OspD3 within the RIP homotypic interaction motif (RHIM), leading to its degradation and inhibition of necroptosis. Proteolytically cleaved by CASP8 at Asp-324. Cleavage is crucial for limiting TNF-induced apoptosis, necroptosis and inflammatory response. Cleavage abolishes NF-kappa-B activation and enhances the interaction of TRADD with FADD. Proteolytically cleaved by CASP6 during intrinsic apoptosis. In terms of processing, RIPK1 and RIPK3 undergo reciprocal auto- and trans-phosphorylation. Phosphorylation of Ser-161 by RIPK3 is necessary for the formation of the necroptosis-inducing complex. Phosphorylation at Ser-25 represses its kinase activity and consequently prevents TNF-mediated RIPK1-dependent cell death. Phosphorylated at Ser-320 by MAP3K7 which requires prior ubiquitination with 'Lys-63'-linked chains by BIRC2/c-IAP1 and BIRC3/c-IAP2. This phosphorylation positively regulates RIPK1 interaction with RIPK3 to promote necroptosis but negatively regulates RIPK1 kinase activity and its interaction with FADD to mediate apoptosis. Post-translationally, deubiquitinated by USP7; this modification is required for TNF-alpha-induced apoptosis. Ubiquitinated with 'Lys-11'-, 'Lys-48'-, 'Lys-63'- and linear-linked type ubiquitin. Polyubiquitination with 'Lys-63'-linked chains by TRAF2 induces association with the IKK complex. Deubiquitination of 'Lys-63'-linked chains and polyubiquitination with 'Lys-48'-linked chains by TNFAIP3 leads to RIPK1 proteasomal degradation and consequently down-regulates TNF-alpha-induced NF-kappa-B signaling. 'Lys-48'-linked polyubiquitination by RFFL or RNF34 also promotes proteasomal degradation and negatively regulates TNF-alpha-induced NF-kappa-B signaling. Linear polyubiquitinated; the head-to-tail linear polyubiquitination ('Met-1'-linked) is mediated by the LUBAC complex and decreases protein kinase activity. Deubiquitination of linear polyubiquitin by CYLD promotes the kinase activity. Polyubiquitinated with 'Lys-48' and 'Lys-63'-linked chains by BIRC2/c-IAP1 and BIRC3/c-IAP2, leading to activation of NF-kappa-B. Ubiquitinated with 'Lys-63'-linked chains by PELI1. Ubiquitination at Lys-377 with 'Lys-63'-linked chains by BIRC2/c-IAP1 and BIRC3/c-IAP2 is essential for its phosphorylation at Ser-320 mediated by MAP3K7. This ubiquitination is required for NF-kB activation, suppresses RIPK1 kinase activity and plays a critical role in preventing cell death during embryonic development. In terms of processing, (Microbial infection) Glycosylated at Arg-603 by enteropathogenic E.coli protein NleB1: arginine GlcNAcylation prevents homotypic/heterotypic death domain interactions.

It is found in the cytoplasm. Its subcellular location is the cell membrane. It catalyses the reaction L-seryl-[protein] + ATP = O-phospho-L-seryl-[protein] + ADP + H(+). The enzyme catalyses L-threonyl-[protein] + ATP = O-phospho-L-threonyl-[protein] + ADP + H(+). Its activity is regulated as follows. Serine-threonine kinase activity is inhibited by linear polyubiquitination ('Met-1'-linked) by the LUBAC complex. Inhibited by necrostatins, including necrostatin-1, necrostatin-3 and necrostatin-4. Its function is as follows. Serine-threonine kinase which is a key regulator of TNF-mediated apoptosis, necroptosis and inflammatory pathways. Exhibits kinase activity-dependent functions that regulate cell death and kinase-independent scaffold functions regulating inflammatory signaling and cell survival. Has kinase-independent scaffold functions: upon binding of TNF to TNFR1, RIPK1 is recruited to the TNF-R1 signaling complex (TNF-RSC also known as complex I) where it acts as a scaffold protein promoting cell survival, in part, by activating the canonical NF-kappa-B pathway. Kinase activity is essential to regulate necroptosis and apoptosis, two parallel forms of cell death: upon activation of its protein kinase activity, regulates assembly of two death-inducing complexes, namely complex IIa (RIPK1-FADD-CASP8), which drives apoptosis, and the complex IIb (RIPK1-RIPK3-MLKL), which drives necroptosis. RIPK1 is required to limit CASP8-dependent TNFR1-induced apoptosis. In normal conditions, RIPK1 acts as an inhibitor of RIPK3-dependent necroptosis, a process mediated by RIPK3 component of complex IIb, which catalyzes phosphorylation of MLKL upon induction by ZBP1. Inhibits RIPK3-mediated necroptosis via FADD-mediated recruitment of CASP8, which cleaves RIPK1 and limits TNF-induced necroptosis. Required to inhibit apoptosis and necroptosis during embryonic development: acts by preventing the interaction of TRADD with FADD thereby limiting aberrant activation of CASP8. In addition to apoptosis and necroptosis, also involved in inflammatory response by promoting transcriptional production of pro-inflammatory cytokines, such as interleukin-6 (IL6). Phosphorylates RIPK3: RIPK1 and RIPK3 undergo reciprocal auto- and trans-phosphorylation. Phosphorylates DAB2IP at 'Ser-728' in a TNF-alpha-dependent manner, and thereby activates the MAP3K5-JNK apoptotic cascade. Required for ZBP1-induced NF-kappa-B activation in response to DNA damage. The chain is Receptor-interacting serine/threonine-protein kinase 1 from Homo sapiens (Human).